A 241-amino-acid chain; its full sequence is Triosephosphate isomerase (241 aa).

Substrate is bound at residue 9–11 (NWK). Residue H88 is the Electrophile of the active site. E158 serves as the catalytic Proton acceptor. Substrate contacts are provided by residues G164, S203, and 224-225 (GG).

Belongs to the triosephosphate isomerase family. Homodimer.

It is found in the cytoplasm. It catalyses the reaction D-glyceraldehyde 3-phosphate = dihydroxyacetone phosphate. It participates in carbohydrate biosynthesis; gluconeogenesis. It functions in the pathway carbohydrate degradation; glycolysis; D-glyceraldehyde 3-phosphate from glycerone phosphate: step 1/1. In terms of biological role, involved in the gluconeogenesis. Catalyzes stereospecifically the conversion of dihydroxyacetone phosphate (DHAP) to D-glyceraldehyde-3-phosphate (G3P). This Dichelobacter nodosus (strain VCS1703A) protein is Triosephosphate isomerase.